The sequence spans 985 residues: DNA polymerase (985 aa).

Residues 936–972 (APSASDASGKRARKGAAPSDDESGSSEDEDAPCEPKC) are disordered. Residues 954–967 (SDDESGSSEDEDAP) are compositionally biased toward acidic residues.

This sequence belongs to the DNA polymerase type-B family.

The catalysed reaction is DNA(n) + a 2'-deoxyribonucleoside 5'-triphosphate = DNA(n+1) + diphosphate. Functionally, replicates the viral genome, host DNA polymerases cannot substitute for the viral enzyme in this process. The polypeptide is DNA polymerase (POL) (Orgyia pseudotsugata (Douglas-fir tussock moth)).